The sequence spans 116 residues: Phosphoribosyl-AMP cyclohydrolase (116 aa).

Asp-85 contributes to the Mg(2+) binding site. Cys-86 contributes to the Zn(2+) binding site. The Mg(2+) site is built by Asp-87 and Asp-89. Zn(2+)-binding residues include Cys-102 and Cys-109.

It belongs to the PRA-CH family. In terms of assembly, homodimer. Mg(2+) serves as cofactor. Zn(2+) is required as a cofactor.

The protein resides in the cytoplasm. It catalyses the reaction 1-(5-phospho-beta-D-ribosyl)-5'-AMP + H2O = 1-(5-phospho-beta-D-ribosyl)-5-[(5-phospho-beta-D-ribosylamino)methylideneamino]imidazole-4-carboxamide. The protein operates within amino-acid biosynthesis; L-histidine biosynthesis; L-histidine from 5-phospho-alpha-D-ribose 1-diphosphate: step 3/9. In terms of biological role, catalyzes the hydrolysis of the adenine ring of phosphoribosyl-AMP. This chain is Phosphoribosyl-AMP cyclohydrolase, found in Corynebacterium diphtheriae (strain ATCC 700971 / NCTC 13129 / Biotype gravis).